Here is a 369-residue protein sequence, read N- to C-terminus: Somatostatin receptor type 2 (369 aa).

The Extracellular segment spans residues 1 to 43 (MDMAYELLNGSQPWLSSPFDLNGSVATANSSNQTEPYYDLTSN). 4 N-linked (GlcNAc...) asparagine glycosylation sites follow: Asn9, Asn22, Asn29, and Asn32. A helical transmembrane segment spans residues 44–67 (AVLTFIYFVVCIIGLCGNTLVIYV). Residues 68 to 78 (ILRYAKMKTIT) lie on the Cytoplasmic side of the membrane. Residues 79 to 103 (NIYILNLAIADELFMLGLPFLAMQV) form a helical membrane-spanning segment. At 104–118 (ALVHWPFGKAICRVV) the chain is on the extracellular side. Cys115 and Cys193 are joined by a disulfide. A helical membrane pass occupies residues 119–138 (MTVDGINQFTSIFCLTVMSI). Topologically, residues 139-161 (DRYLAVVHPIKSAKWRRPRTAKM) are cytoplasmic. A helical membrane pass occupies residues 162–181 (INVAVWGVSLLVILPIMIYA). The Extracellular portion of the chain corresponds to 182-207 (GLRSNQWGRSSCTINWPGESGAWYTG). The helical transmembrane segment at 208–229 (FIIYAFILGFLVPLTIICLCYL) threads the bilayer. Residues 230–253 (FIIIKVKSSGIRVGSSKRKKSEKK) are Cytoplasmic-facing. A helical transmembrane segment spans residues 254 to 278 (VTRMVSIVVAVFIFCWLPFYIFNVS). The Extracellular portion of the chain corresponds to 279 to 288 (SVSVAISPTP). A helical transmembrane segment spans residues 289 to 303 (ALKGMFDFVVVLTYA). Residues 304 to 369 (NSCANPILYA…LLNGDLQTSI (66 aa)) are Cytoplasmic-facing. Cys328 carries the S-palmitoyl cysteine lipid modification. 3 positions are modified to phosphoserine: Ser341, Ser343, and Ser348. Thr353 and Thr354 each carry phosphothreonine.

It belongs to the G-protein coupled receptor 1 family. As to quaternary structure, homodimer and heterodimer with SSTR3 and SSTR5. Heterodimerization with SSTR3 inactivates SSTR3 receptor function. Heterodimerization with SSTR5 is enhanced by agonist stimulation of SSTR2 and increases SSTR2 cell growth inhibition activity. Following agonist stimulation, homodimers dissociate into monomers which is required for receptor internalization. Interacts with beta-arrestin; this interaction is necessary for receptor internalization and is destabilized by heterodimerization with SSTR5 which results in increased recycling of SSTR2 to the cell surface. Interacts (via C-terminus) with SHANK1 (via PDZ domain). In terms of processing, phosphorylated on serine and threonine residues in response to agonist stimulation, leading to receptor desensitization and rapid internalization. Phosphorylated to a greater extent on serine than threonine residues. Threonine phosphorylation is required for arrestin binding and receptor endocytosis but is not necessary for desensitization.

The protein localises to the cell membrane. It localises to the cytoplasm. Its function is as follows. Receptor for somatostatin-14 and -28. This receptor is coupled via pertussis toxin sensitive G proteins to inhibition of adenylyl cyclase. In addition it stimulates phosphotyrosine phosphatase and PLC via pertussis toxin insensitive as well as sensitive G proteins. Inhibits calcium entry by suppressing voltage-dependent calcium channels. Acts as the functionally dominant somatostatin receptor in pancreatic alpha- and beta-cells where it mediates the inhibitory effect of somatostatin-14 on hormone secretion. Inhibits cell growth through enhancement of MAPK1 and MAPK2 phosphorylation and subsequent up-regulation of CDKN1B. Stimulates neuronal migration and axon outgrowth and may participate in neuron development and maturation during brain development. Mediates negative regulation of insulin receptor signaling through PTPN6. Inactivates SSTR3 receptor function following heterodimerization. This is Somatostatin receptor type 2 (SSTR2) from Sus scrofa (Pig).